A 416-amino-acid chain; its full sequence is Ribulose bisphosphate carboxylase large chain (416 aa).

At Lys5 the chain carries N6,N6,N6-trimethyllysine. Positions 114 and 164 each coordinate substrate. Lys166 functions as the Proton acceptor in the catalytic mechanism. Residue Lys168 participates in substrate binding. Lys192, Asp194, and Glu195 together coordinate Mg(2+). Lys192 carries the N6-carboxylysine modification. His285 serves as the catalytic Proton acceptor. Residues Arg286, His318, and Ser370 each contribute to the substrate site.

Belongs to the RuBisCO large chain family. Type I subfamily. In terms of assembly, heterohexadecamer of 8 large chains and 8 small chains; disulfide-linked. The disulfide link is formed within the large subunit homodimers. Mg(2+) serves as cofactor. Post-translationally, the disulfide bond which can form in the large chain dimeric partners within the hexadecamer appears to be associated with oxidative stress and protein turnover.

The protein resides in the plastid. It is found in the chloroplast. The catalysed reaction is 2 (2R)-3-phosphoglycerate + 2 H(+) = D-ribulose 1,5-bisphosphate + CO2 + H2O. It carries out the reaction D-ribulose 1,5-bisphosphate + O2 = 2-phosphoglycolate + (2R)-3-phosphoglycerate + 2 H(+). RuBisCO catalyzes two reactions: the carboxylation of D-ribulose 1,5-bisphosphate, the primary event in carbon dioxide fixation, as well as the oxidative fragmentation of the pentose substrate in the photorespiration process. Both reactions occur simultaneously and in competition at the same active site. The protein is Ribulose bisphosphate carboxylase large chain (rbcL) of Spigelia marilandica (Woodland pinkroot).